The chain runs to 338 residues: 3-dehydroquinate synthase (338 aa).

NAD(+) contacts are provided by residues 58 to 63 (DGERAK), 92 to 96 (GTTGD), 116 to 117 (TT), Lys-129, and Lys-138. Residues Glu-169, His-229, and His-245 each contribute to the Zn(2+) site.

This sequence belongs to the sugar phosphate cyclases superfamily. Dehydroquinate synthase family. Requires NAD(+) as cofactor. It depends on Co(2+) as a cofactor. Zn(2+) is required as a cofactor.

Its subcellular location is the cytoplasm. It catalyses the reaction 7-phospho-2-dehydro-3-deoxy-D-arabino-heptonate = 3-dehydroquinate + phosphate. The protein operates within metabolic intermediate biosynthesis; chorismate biosynthesis; chorismate from D-erythrose 4-phosphate and phosphoenolpyruvate: step 2/7. In terms of biological role, catalyzes the conversion of 3-deoxy-D-arabino-heptulosonate 7-phosphate (DAHP) to dehydroquinate (DHQ). The chain is 3-dehydroquinate synthase from Picrophilus torridus (strain ATCC 700027 / DSM 9790 / JCM 10055 / NBRC 100828 / KAW 2/3).